The sequence spans 516 residues: Coiled-coil domain-containing protein 82 (516 aa).

The span at 1–13 shows a compositional bias: basic residues; that stretch reads MVHARRHETRKNS. Positions 1 to 265 are disordered; the sequence is MVHARRHETR…DYGDAENEDD (265 aa). Acidic residues predominate over residues 38–62; sequence DSDEELDSDEEIGSDEDLDGGESID. The segment covering 78-96 has biased composition (basic and acidic residues); the sequence is IPEKETELNLIKVESERSN. Residues 98–107 are compositionally biased toward polar residues; sequence KCHMNTSSSS. Residues 113–135 are compositionally biased toward basic and acidic residues; that stretch reads MNKTKHNDLPDDEAHPGQAEGHH. Ser170 and Ser194 each carry phosphoserine. Thr202 carries the post-translational modification Phosphothreonine. Residues 204 to 232 are a coiled coil; the sequence is EKSPAARKREYHQKLQELCERSRQKQRHN. Residues 215–226 show a composition bias toward basic and acidic residues; it reads HQKLQELCERSR. Over residues 248 to 265 the composition is skewed to acidic residues; sequence TDEDEDDDDYGDAENEDD. A Phosphoserine modification is found at Ser301.

In Rattus norvegicus (Rat), this protein is Coiled-coil domain-containing protein 82 (Ccdc82).